Consider the following 167-residue polypeptide: 2-C-methyl-D-erythritol 2,4-cyclodiphosphate synthase (167 aa).

A divalent metal cation is bound by residues Asp10 and His12. Residues 10–12 and 36–37 each bind 4-CDP-2-C-methyl-D-erythritol 2-phosphate; these read DVH and HS. An a divalent metal cation-binding site is contributed by His44. 4-CDP-2-C-methyl-D-erythritol 2-phosphate contacts are provided by residues 58 to 60, 63 to 67, 134 to 137, Phe141, and Arg144; these read NIG, FPNTN, and TTSE.

It belongs to the IspF family. As to quaternary structure, homotrimer. Requires a divalent metal cation as cofactor.

The enzyme catalyses 4-CDP-2-C-methyl-D-erythritol 2-phosphate = 2-C-methyl-D-erythritol 2,4-cyclic diphosphate + CMP. The protein operates within isoprenoid biosynthesis; isopentenyl diphosphate biosynthesis via DXP pathway; isopentenyl diphosphate from 1-deoxy-D-xylulose 5-phosphate: step 4/6. Functionally, involved in the biosynthesis of isopentenyl diphosphate (IPP) and dimethylallyl diphosphate (DMAPP), two major building blocks of isoprenoid compounds. Catalyzes the conversion of 4-diphosphocytidyl-2-C-methyl-D-erythritol 2-phosphate (CDP-ME2P) to 2-C-methyl-D-erythritol 2,4-cyclodiphosphate (ME-CPP) with a corresponding release of cytidine 5-monophosphate (CMP). The sequence is that of 2-C-methyl-D-erythritol 2,4-cyclodiphosphate synthase from Azobacteroides pseudotrichonymphae genomovar. CFP2.